Reading from the N-terminus, the 256-residue chain is 6-phosphogluconolactonase (256 aa).

It belongs to the glucosamine/galactosamine-6-phosphate isomerase family. 6-phosphogluconolactonase subfamily.

The enzyme catalyses 6-phospho-D-glucono-1,5-lactone + H2O = 6-phospho-D-gluconate + H(+). The protein operates within carbohydrate degradation; pentose phosphate pathway; D-ribulose 5-phosphate from D-glucose 6-phosphate (oxidative stage): step 2/3. Functionally, hydrolysis of 6-phosphogluconolactone to 6-phosphogluconate. This Chlamydia muridarum (strain MoPn / Nigg) protein is 6-phosphogluconolactonase (pgl).